A 137-amino-acid polypeptide reads, in one-letter code: Phosphoribosyl-AMP cyclohydrolase (137 aa).

Mg(2+) is bound at residue Asp84. Cys85 contributes to the Zn(2+) binding site. Mg(2+) contacts are provided by Asp86 and Asp88. Zn(2+)-binding residues include Cys101 and Cys108.

The protein belongs to the PRA-CH family. As to quaternary structure, homodimer. Mg(2+) serves as cofactor. Zn(2+) is required as a cofactor.

It is found in the cytoplasm. The catalysed reaction is 1-(5-phospho-beta-D-ribosyl)-5'-AMP + H2O = 1-(5-phospho-beta-D-ribosyl)-5-[(5-phospho-beta-D-ribosylamino)methylideneamino]imidazole-4-carboxamide. Its pathway is amino-acid biosynthesis; L-histidine biosynthesis; L-histidine from 5-phospho-alpha-D-ribose 1-diphosphate: step 3/9. Functionally, catalyzes the hydrolysis of the adenine ring of phosphoribosyl-AMP. The sequence is that of Phosphoribosyl-AMP cyclohydrolase from Chlorobium phaeovibrioides (strain DSM 265 / 1930) (Prosthecochloris vibrioformis (strain DSM 265)).